The primary structure comprises 468 residues: Peripherin (468 aa).

Residues 1–16 are compositionally biased toward low complexity; it reads MSHHSSGLRSSISSTS. A disordered region spans residues 1–22; sequence MSHHSSGLRSSISSTSYRRTFG. The interval 1–96 is head; sequence MSHHSSGLRS…FLATRSNEKQ (96 aa). Tyrosine 17 is modified (3'-nitrotyrosine). Phosphoserine is present on residues serine 28, serine 50, and serine 59. In terms of domain architecture, IF rod spans 94-404; the sequence is EKQELQELND…KLLEGEESRI (311 aa). The segment at 97–129 is coil 1A; the sequence is ELQELNDRFANFIEKVRFLEQQNAALRGELSQA. The segment at 130-140 is linker 1; it reads RGQEPARADQL. The coil 1B stretch occupies residues 141 to 236; that stretch reads CQQELRELRR…KLHEEELRDL (96 aa). The tract at residues 237-259 is linker 2; it reads QVSVESQQVQQVEVEATVKPELT. The segment at 260–402 is coil 2; it reads AALRDIRAQY…YRKLLEGEES (143 aa). Tyrosine 376 bears the 3'-nitrotyrosine mark. Residues 403–468 form a tail region; that stretch reads RISVPVHSFA…ELDKSSIHSY (66 aa). The disordered stretch occupies residues 445 to 468; the sequence is GEKVVTESQKEQHSELDKSSIHSY. Residue tyrosine 468 is modified to Phosphotyrosine.

Belongs to the intermediate filament family. Forms homodimers (in vitro). Homopolymerizes into a filamentous network (in vitro). Forms heterodimers with NEFL, NEFM or NEFH (in vitro). Interacts with DST (via C-terminus). Interacts with RAB7A; the interaction is direct. Interacts with PRKCE (via phorbol-ester/DAG-type 2 domain). In terms of processing, phosphorylated; phosphorylation increases after nerve injury in regenerating neurons. As to expression, expressed in hypoglossal motor neurons (at protein level). Expressed in the small and large sensory neurons of the dorsal root ganglion (at protein level). Expressed in cutaneous and muscular sensory neurons.

The protein resides in the cytoplasm. It localises to the cytoskeleton. Its subcellular location is the cell projection. It is found in the axon. The protein localises to the perikaryon. In terms of biological role, class-III neuronal intermediate filament protein. My form an independent structural network without the involvement of other neurofilaments or may cooperate with the neuronal intermediate filament proteins NEFL, NEFH, NEFM and INA to form a filamentous network. Assembly of the neuronal intermediate filaments may be regulated by RAB7A. Plays a role in the development of unmyelinated sensory neurons. May be involved in axon elongation and axon regeneration after injury. Inhibits neurite extension in type II spiral ganglion neurons in the cochlea. In Rattus norvegicus (Rat), this protein is Peripherin (Prph).